Consider the following 372-residue polypeptide: Cytochrome b (372 aa).

4 helical membrane passes run 32–52 (LGFN…CLSW), 77–99 (FIIR…IHII), 114–134 (VWFF…IGYT), and 180–200 (LHSI…AHFF). 2 residues coordinate heme b: H83 and H97. Heme b-binding residues include H184 and H198. H203 is a binding site for a ubiquinone. The next 4 helical transmembrane spans lie at 228–248 (YYLR…YYIC), 297–317 (LLFV…LIFI), 330–350 (LVLF…VLCF), and 351–371 (PLWM…VCRL).

The protein belongs to the cytochrome b family. In terms of assembly, the main subunits of complex b-c1 are: cytochrome b, cytochrome c1 and the Rieske protein. Heme b is required as a cofactor.

The protein resides in the mitochondrion inner membrane. Component of the ubiquinol-cytochrome c reductase complex (complex III or cytochrome b-c1 complex) that is part of the mitochondrial respiratory chain. The b-c1 complex mediates electron transfer from ubiquinol to cytochrome c. Contributes to the generation of a proton gradient across the mitochondrial membrane that is then used for ATP synthesis. This Trypanoplasma borreli protein is Cytochrome b (MT-CYB).